The chain runs to 44 residues: Somatoliberin (44 aa).

Leu-44 is modified (leucine amide).

Belongs to the glucagon family.

It localises to the secreted. Its function is as follows. GRF is released by the hypothalamus and acts on the adenohypophyse to stimulate the secretion of growth hormone. The chain is Somatoliberin (GHRH) from Capra hircus (Goat).